The chain runs to 389 residues: MGQNLSTSNPLGFFPDHQLDPAFRANTANPDWDFNPNKDTWPDANKVGAGAFGLGFTPPHGGLLGWSPQAQGILQTLPANPPPASTNRQSGRQPTPLSPPLRNTHPQAMQWNSTTFHQTLQDPRVRGLYFPAGGSSSGTVNPVLTTASPLSSIFSRIGDPALNMENITSGFLGPLLVLQAGFFLLTRILTIPQSLDSWWTSLNFLGGTTVCLGQNSQSPTSNHSPTSCPPTCPGYRWMCLRRFIIFLFILLLCLIFLLVLLDYQGMLPVCPLIPGSSTTSTGPCRTCMTTAQGTSMYPSCCCTKPSDGNCTCIPIPSSWAFGKFLWEWASARFSWLSLLVPFVQWFVGLSPTVWLSVIWMMWYWGPSLYSILSPFLPLLPIFFCLWVYI.

Methionine 1 bears the N-acetylmethionine mark. Glycine 2 is lipidated: N-myristoyl glycine; by host. The interval 2-108 (GQNLSTSNPL…PPLRNTHPQA (107 aa)) is pre-S1. The tract at residues 2-163 (GQNLSTSNPL…FSRIGDPALN (162 aa)) is pre-S. Residues 2 to 170 (GQNLSTSNPL…ALNMENITSG (169 aa)) lie on the Virion surface; in external conformation side of the membrane. Over 2–242 (GQNLSTSNPL…PGYRWMCLRR (241 aa)) the chain is Intravirion; in internal conformation. An O-linked (GalNAc...) threonine glycan is attached at asparagine 37. The interval 76–103 (TLPANPPPASTNRQSGRQPTPLSPPLRN) is disordered. Positions 85–95 (STNRQSGRQPT) are enriched in polar residues. The pre-S2 stretch occupies residues 109–163 (MQWNSTTFHQTLQDPRVRGLYFPAGGSSSGTVNPVLTTASPLSSIFSRIGDPALN). Residues 171–191 (FLGPLLVLQAGFFLLTRILTI) traverse the membrane as a helical segment. Over 192–242 (PQSLDSWWTSLNFLGGTTVCLGQNSQSPTSNHSPTSCPPTCPGYRWMCLRR) the chain is Intravirion; in external conformation. Residues 243–263 (FIIFLFILLLCLIFLLVLLDY) form a helical membrane-spanning segment. Over 264–337 (QGMLPVCPLI…WASARFSWLS (74 aa)) the chain is Virion surface. Asparagine 309 carries an N-linked (GlcNAc...) asparagine; by host glycan. A helical transmembrane segment spans residues 338–358 (LLVPFVQWFVGLSPTVWLSVI). Over 359–364 (WMMWYW) the chain is Intravirion. A helical membrane pass occupies residues 365 to 387 (GPSLYSILSPFLPLLPIFFCLWV). Over 388–389 (YI) the chain is Virion surface.

Belongs to the orthohepadnavirus major surface antigen family. In terms of assembly, in its internal form (Li-HBsAg), interacts with the capsid protein and with the isoform S. Interacts with host chaperone CANX. As to quaternary structure, associates with host chaperone CANX through its pre-S2 N glycan; this association may be essential for isoform M proper secretion. Interacts with isoform L. Interacts with the antigens of satellite virus HDV (HDVAgs); this interaction is required for encapsidation of HDV genomic RNA. Isoform M is N-terminally acetylated by host at a ratio of 90%, and N-glycosylated by host at the pre-S2 region. Post-translationally, myristoylated.

It is found in the virion membrane. In terms of biological role, the large envelope protein exists in two topological conformations, one which is termed 'external' or Le-HBsAg and the other 'internal' or Li-HBsAg. In its external conformation the protein attaches the virus to cell receptors and thereby initiating infection. This interaction determines the species specificity and liver tropism. This attachment induces virion internalization predominantly through caveolin-mediated endocytosis. The large envelope protein also assures fusion between virion membrane and endosomal membrane. In its internal conformation the protein plays a role in virion morphogenesis and mediates the contact with the nucleocapsid like a matrix protein. Functionally, the middle envelope protein plays an important role in the budding of the virion. It is involved in the induction of budding in a nucleocapsid independent way. In this process the majority of envelope proteins bud to form subviral lipoprotein particles of 22 nm of diameter that do not contain a nucleocapsid. In Homo sapiens (Human), this protein is Large envelope protein.